Here is a 473-residue protein sequence, read N- to C-terminus: Tyrosine phenol-lyase (473 aa).

Lysine 257 bears the N6-(pyridoxal phosphate)lysine mark.

This sequence belongs to the beta-eliminating lyase family. In terms of assembly, homotetramer. Pyridoxal 5'-phosphate is required as a cofactor.

It carries out the reaction L-tyrosine + H2O = phenol + pyruvate + NH4(+). The polypeptide is Tyrosine phenol-lyase (Intrasporangium calvum (strain ATCC 23552 / DSM 43043 / JCM 3097 / NBRC 12989 / NCIMB 10167 / NRRL B-3866 / 7 KIP)).